Reading from the N-terminus, the 634-residue chain is MTVETQKETLGFQTEVKQLLHLMIHSLYSNKEIFLRELISNASDAADKLRFEALAKPELFEGDADLKIRLSFDKDAGTVTLEDNGIGMSREDVIAHLGTIAKSGTADFMKNLTGDQKKDSHLIGQFGVGFYSAFIVADKVDVYSRRAGQPAAEGVHWSSKGEGEFEVATIDKPQRGTRIVLHLKKDEQEFADGWRLRNVVKKYSDHIALPIQLPKEQAATEGEEQPAEEWETVNRASALWTRSRTEVKDEEYQEFYKHIGHDFENPLAWSHNKVEGKLEYNSLLYVPARAPFDLYQREAPRGLKLYVQRVFIMDQAESFLPLYLRFIKGVVDSNDLSLNVSREILQKDPIIDSMKTALTKRVLDMLEKLAKNEPEKYKGFWKNFGQVLKEGPAEDFANKEKIAGLLRFASTQDDSGEQSVALADYLARAKEGQDKIYYLTGESYAQVKNSPHLEVFRKKGIEVLLLTDRIDEWLMSYLNEFDGKAFVDIARGDLDLGKLDSEEDKKAQEEVAKDKEGLVERLKGALGDSVAEVRVSHRLTDSPAILAIGEQDLGLQMRQILEASGQKVPESKPIFEFNPSHPLIEKLDHEQSEDRFAELSHILFDQAALAAGDSLKDPAAYVRRLNKLLVELSA.

The interval M1 to R342 is a; substrate-binding. A b region spans residues E343–Q559. The interval I560–A634 is c.

This sequence belongs to the heat shock protein 90 family. In terms of assembly, homodimer.

The protein resides in the cytoplasm. Molecular chaperone. Has ATPase activity. This chain is Chaperone protein HtpG, found in Pseudomonas putida (strain ATCC 47054 / DSM 6125 / CFBP 8728 / NCIMB 11950 / KT2440).